We begin with the raw amino-acid sequence, 283 residues long: Elongation factor Ts (283 aa).

An involved in Mg(2+) ion dislocation from EF-Tu region spans residues 79–82 (TDFV).

This sequence belongs to the EF-Ts family.

The protein localises to the cytoplasm. Functionally, associates with the EF-Tu.GDP complex and induces the exchange of GDP to GTP. It remains bound to the aminoacyl-tRNA.EF-Tu.GTP complex up to the GTP hydrolysis stage on the ribosome. The protein is Elongation factor Ts of Shewanella putrefaciens (strain CN-32 / ATCC BAA-453).